The primary structure comprises 492 residues: E1B 55 kDa protein (492 aa).

The disordered stretch occupies residues 22–112; that stretch reads ENMEGSQDED…ERNPSGNNSR (91 aa). The span at 34–44 shows a compositional bias: low complexity; sequence RLLASAASGSS. Serine 486 and serine 487 each carry phosphoserine. At threonine 491 the chain carries Phosphothreonine.

The protein belongs to the adenoviridae E1B 55 kDa protein family. In terms of assembly, interacts with host PML-4 and PML-5; this interaction promotes efficient subnuclear targeting of E1B-55K to PML nuclear bodies. Interacts with E4-ORF3 protein. Interacts with E4-ORF6 protein.

The protein localises to the host nucleus. The protein resides in the host cytoplasm. Its function is as follows. Plays a major role to prevent cellular inhibition of viral genome replication. Assembles an SCF-like E3 ubiquitin ligase complex based on the cellular proteins ELOB, ELOC, CUL5 and RBX1, in cooperation with viral E4orf6. This viral RING-type ligase ubiquitinates cellular substrates and targets them to proteasomal degradation: TP53/p53, LIG4, MRE11-RAD50-NBS1 (MRN) complex, ITGA3, DAXX and BLM. E1B-55K probably acts as the substrate-specific adapter of the SCF-like E3 ubiquitin ligase complex. Degradation of host TP53/p53 activity is essential for preventing E1A-induced TP53 accumulation that would otherwise lead to cell apoptosis and growth arrest. E1B-55K also inactivates TP53 transcription-factor activity by binding its transactivation domain. E1B-55K also functions as a SUMO1 E3 ligase for TP53 which causes the latter to be sequestered in promyelocytic leukemia (PML) nuclear bodies thereby contributing to maximal inhibition of TP53 function. This chain is E1B 55 kDa protein, found in Human adenovirus B serotype 7 (HAdV-7).